Consider the following 545-residue polypeptide: Hydroxylamine reductase (545 aa).

[4Fe-4S] cluster contacts are provided by cysteine 3, cysteine 6, cysteine 15, and cysteine 21. Residues histidine 241, glutamate 265, cysteine 309, cysteine 396, cysteine 424, cysteine 449, glutamate 483, and lysine 485 each coordinate hybrid [4Fe-2O-2S] cluster. A Cysteine persulfide modification is found at cysteine 396.

Belongs to the HCP family. [4Fe-4S] cluster is required as a cofactor. The cofactor is hybrid [4Fe-2O-2S] cluster.

It is found in the cytoplasm. It carries out the reaction A + NH4(+) + H2O = hydroxylamine + AH2 + H(+). Catalyzes the reduction of hydroxylamine to form NH(3) and H(2)O. The chain is Hydroxylamine reductase from Zymomonas mobilis subsp. mobilis (strain ATCC 31821 / ZM4 / CP4).